The primary structure comprises 215 residues: Pyrrolidone-carboxylate peptidase (215 aa).

Residues Glu-78, Cys-141, and His-165 contribute to the active site.

This sequence belongs to the peptidase C15 family. Homotetramer.

It is found in the cytoplasm. The enzyme catalyses Release of an N-terminal pyroglutamyl group from a polypeptide, the second amino acid generally not being Pro.. Functionally, removes 5-oxoproline from various penultimate amino acid residues except L-proline. The chain is Pyrrolidone-carboxylate peptidase from Lacticaseibacillus paracasei (strain ATCC 334 / BCRC 17002 / CCUG 31169 / CIP 107868 / KCTC 3260 / NRRL B-441) (Lactobacillus paracasei).